A 435-amino-acid polypeptide reads, in one-letter code: MMQNQYQGKIITIVGLGKTGLSCVAFFAEKQATIQVIDTREQPAGIEHLSDNVALHTGSLNLEWLLASDLIVMSPGLALATPEIQTAIQAGIEVVGDIELFVREAKAPIIAITGSNGKSTVTTLVSEMAQQAGIKVGMGGNIGIPALSLLNKGYELFVLELSSFQLETTYSLKAKAATILNVSQDHMDRYASGEHYRQAKLRIYENAEYVIVNDDDPLTYPLPSQSVGNLRHFAEHDAQYAIKYDQLCSGDQAVINTDQMLLTGRHNQLNALAAIALAEAAGINRTGIINGLRCYGGLAHRFQRVPTNDGVCWVNDSKATNVGSTVAALNGLPLSGTLYLLLGGDGKGADFSMLKALVNQPHIVCYCFGKDGKSLAELTTNSVLVDTMQQAIEQIRPLVKQGDMVLLSPACASLDQFNNFEERGDMFARLAQQAV.

Position 114–120 (114–120 (GSNGKST)) interacts with ATP.

This sequence belongs to the MurCDEF family.

Its subcellular location is the cytoplasm. It catalyses the reaction UDP-N-acetyl-alpha-D-muramoyl-L-alanine + D-glutamate + ATP = UDP-N-acetyl-alpha-D-muramoyl-L-alanyl-D-glutamate + ADP + phosphate + H(+). It functions in the pathway cell wall biogenesis; peptidoglycan biosynthesis. Its function is as follows. Cell wall formation. Catalyzes the addition of glutamate to the nucleotide precursor UDP-N-acetylmuramoyl-L-alanine (UMA). The polypeptide is UDP-N-acetylmuramoylalanine--D-glutamate ligase (Haemophilus ducreyi (strain 35000HP / ATCC 700724)).